A 366-amino-acid chain; its full sequence is NADH-quinone oxidoreductase subunit D (366 aa).

This sequence belongs to the complex I 49 kDa subunit family. As to quaternary structure, NDH-1 is composed of 14 different subunits. Subunits NuoB, C, D, E, F, and G constitute the peripheral sector of the complex.

It localises to the cell membrane. The enzyme catalyses a quinone + NADH + 5 H(+)(in) = a quinol + NAD(+) + 4 H(+)(out). NDH-1 shuttles electrons from NADH, via FMN and iron-sulfur (Fe-S) centers, to quinones in the respiratory chain. The immediate electron acceptor for the enzyme in this species is believed to be a menaquinone. Couples the redox reaction to proton translocation (for every two electrons transferred, four hydrogen ions are translocated across the cytoplasmic membrane), and thus conserves the redox energy in a proton gradient. This is NADH-quinone oxidoreductase subunit D from Bacillus cytotoxicus (strain DSM 22905 / CIP 110041 / 391-98 / NVH 391-98).